We begin with the raw amino-acid sequence, 544 residues long: Hydroxylamine reductase (544 aa).

Positions 3, 6, 15, and 21 each coordinate [4Fe-4S] cluster. Hybrid [4Fe-2O-2S] cluster-binding residues include His-244, Glu-268, Cys-313, Cys-400, Cys-428, Cys-453, Glu-487, and Lys-489. Residue Cys-400 is modified to Cysteine persulfide.

It belongs to the HCP family. [4Fe-4S] cluster is required as a cofactor. The cofactor is hybrid [4Fe-2O-2S] cluster.

The protein resides in the cytoplasm. The catalysed reaction is A + NH4(+) + H2O = hydroxylamine + AH2 + H(+). Functionally, catalyzes the reduction of hydroxylamine to form NH(3) and H(2)O. The chain is Hydroxylamine reductase from Trichormus variabilis (strain ATCC 29413 / PCC 7937) (Anabaena variabilis).